Here is a 177-residue protein sequence, read N- to C-terminus: Large ribosomal subunit protein bL9 (177 aa).

The disordered stretch occupies residues 151–177 (EDEEIAEAAPVAEAQAEADGHSTEETA). A compositionally biased stretch (low complexity) spans 157–167 (EAAPVAEAQAE). Residues 168–177 (ADGHSTEETA) show a composition bias toward basic and acidic residues.

The protein belongs to the bacterial ribosomal protein bL9 family.

In terms of biological role, binds to the 23S rRNA. This Solidesulfovibrio magneticus (strain ATCC 700980 / DSM 13731 / RS-1) (Desulfovibrio magneticus) protein is Large ribosomal subunit protein bL9.